The sequence spans 893 residues: Pentatricopeptide repeat-containing protein At5g52850, chloroplastic (893 aa).

PPR repeat units lie at residues 57 to 87 (NLDL…MSHR), 88 to 122 (TVFA…GTHP), 123 to 157 (NEFT…GFEG), 158 to 188 (NSVV…LQNA), 189 to 223 (DTIS…GVPP), 224 to 257 (NEFT…GIPL), 258 to 288 (NVVL…SGEQ), 289 to 323 (DVFL…GLQP), 324 to 358 (NNFT…GFED), 359 to 390 (STDV…MVSP), 391 to 425 (NVVS…EVEP), 426 to 460 (NVVT…HVDG), 461 to 491 (EMVV…MKRR), 492 to 526 (DNIT…GIRM), 527 to 561 (DQLS…GFSG), 562 to 592 (AASV…IATP), 593 to 627 (DVVS…ETEP), 628 to 658 (DSVT…MKKI), and 664 to 694 (QVEH…MHLK). Residues 699–774 (IFKTLLRACR…KLGKSTVEVQ (76 aa)) form a type E motif region. The segment at 775–806 (GKVHSFVSEDVTRVDKTNGIYAEIESIKEEIK) is type E(+) motif. The segment at 807-893 (RFGSPYRGNE…SCKREETSFV (87 aa)) is type DYW motif.

It belongs to the PPR family. PCMP-H subfamily.

It is found in the plastid. Its subcellular location is the chloroplast. In Arabidopsis thaliana (Mouse-ear cress), this protein is Pentatricopeptide repeat-containing protein At5g52850, chloroplastic (PCMP-H31).